Reading from the N-terminus, the 559-residue chain is DNA primase (559 aa).

Residues 37 to 61 (CPFHEERSASFSVNQIKGFYHCFGC) form a CHC2-type zinc finger. In terms of domain architecture, Toprim spans 246–327 (KQVIVTEGYL…RGGVILFENN (82 aa)). Mg(2+) is bound by residues E252, D296, and D298.

It belongs to the DnaG primase family. Monomer. The C-terminal domain DnaB-binding domain exists as a dimer in solution. Interacts with DnaB via its C-terminal domain (residues 415-559 of DnaG); up to 3 DnaG fragments bind to a DnaB hexamer. Zn(2+) is required as a cofactor. Mg(2+) serves as cofactor.

It carries out the reaction ssDNA + n NTP = ssDNA/pppN(pN)n-1 hybrid + (n-1) diphosphate.. Its function is as follows. RNA polymerase that catalyzes the synthesis of short RNA molecules used as primers for DNA polymerase during DNA replication. Stimulates the 5'-3' DNA helicase activity of DnaB. The polypeptide is DNA primase (Helicobacter pylori (strain ATCC 700392 / 26695) (Campylobacter pylori)).